A 560-amino-acid chain; its full sequence is MARPDDEVGPAVAPGHPLGKGYLPVPKGAPDGEARLVPQNGPEALNGGPGLGPLIAGAQGGPQALIAAEEETQARLLPAGDGEDVPCPACPPRTALSPRRFVVLLIFSLYSLVNAFQWIQYSSISNVFEDFYEVSPLHINWLSMVYMVAYVPLIFPATWLLDTRGLRLTALLGSGLNCLGAWVKCGSVQRHLFWVTMLGQILCSVAQVFILGLPSPVASVWFGPKEVSTACATAVLGNQLGTAVGFLLPPVLVPALGTQNSTGLLAHTQNNTDLLAHNINTMFYGTAFISTFLFFLTIIAFKEKPPLPPSQAQAVLRDSPPEEYSYKSSIWNLCRNIPFVLLLVSYGIMTGAFYSISTLLNQIILTYYVGEEVNAGRIGLTLVVAGMVGSILCGLWLDYTKTYKQTTLIVYVLSFIGMLIFTFTLNLGYIIVVFFTGGILGFFMTGYLPLGFEFAVEITYPESEGMSSGLLNTAAQILGIFFTLAQGKITTDYNSPEAGNIFLCAWMFVGIILTALIKSDLRRHNINTGLTNIDVKAVPVDSRVDPKPKVMVSIQSESSL.

Residues 1–43 form a disordered region; the sequence is MARPDDEVGPAVAPGHPLGKGYLPVPKGAPDGEARLVPQNGPE. The Cytoplasmic segment spans residues 1 to 92; it reads MARPDDEVGP…EDVPCPACPP (92 aa). The helical transmembrane segment at 93–117 threads the bilayer; that stretch reads RTALSPRRFVVLLIFSLYSLVNAFQ. The Extracellular portion of the chain corresponds to 118–135; it reads WIQYSSISNVFEDFYEVS. Residues 136-163 traverse the membrane as a helical segment; that stretch reads PLHINWLSMVYMVAYVPLIFPATWLLDT. Residues 164 to 165 lie on the Cytoplasmic side of the membrane; the sequence is RG. A helical transmembrane segment spans residues 166-185; the sequence is LRLTALLGSGLNCLGAWVKC. Topologically, residues 186 to 192 are extracellular; it reads GSVQRHL. A helical transmembrane segment spans residues 193-221; that stretch reads FWVTMLGQILCSVAQVFILGLPSPVASVW. Glutamine 207 contributes to the ethanolamine binding site. Residues 222–226 lie on the Cytoplasmic side of the membrane; the sequence is FGPKE. Residues 227-252 traverse the membrane as a helical segment; that stretch reads VSTACATAVLGNQLGTAVGFLLPPVL. Residues 253-270 are Extracellular-facing; sequence VPALGTQNSTGLLAHTQN. Asparagine 270 carries an N-linked (GlcNAc...) asparagine glycan. Residues 271-300 form a helical membrane-spanning segment; it reads NTDLLAHNINTMFYGTAFISTFLFFLTIIA. The Cytoplasmic portion of the chain corresponds to 301–336; that stretch reads FKEKPPLPPSQAQAVLRDSPPEEYSYKSSIWNLCRN. Residues 337 to 367 traverse the membrane as a helical segment; that stretch reads IPFVLLLVSYGIMTGAFYSISTLLNQIILTY. The Extracellular portion of the chain corresponds to 368–371; that stretch reads YVGE. A helical transmembrane segment spans residues 372-400; that stretch reads EVNAGRIGLTLVVAGMVGSILCGLWLDYT. Over 401–402 the chain is Cytoplasmic; it reads KT. Residues 403 to 425 form a helical membrane-spanning segment; it reads YKQTTLIVYVLSFIGMLIFTFTL. Topologically, residues 426–428 are extracellular; it reads NLG. Residues 429–458 form a helical membrane-spanning segment; the sequence is YIIVVFFTGGILGFFMTGYLPLGFEFAVEI. The Cytoplasmic portion of the chain corresponds to 459 to 466; it reads TYPESEGM. A helical transmembrane segment spans residues 467–492; the sequence is SSGLLNTAAQILGIFFTLAQGKITTD. Residue glutamine 476 participates in ethanolamine binding. Glutamine 476 lines the choline pocket. Over 493-495 the chain is Extracellular; that stretch reads YNS. The helical transmembrane segment at 496–518 threads the bilayer; that stretch reads PEAGNIFLCAWMFVGIILTALIK. Residues 519 to 560 are Cytoplasmic-facing; sequence SDLRRHNINTGLTNIDVKAVPVDSRVDPKPKVMVSIQSESSL. The residue at position 542 (serine 542) is a Phosphoserine.

This sequence belongs to the major facilitator superfamily. Feline leukemia virus subgroup C receptor (TC 2.A.1.28.1) family.

Its subcellular location is the cell membrane. The protein resides in the mitochondrion membrane. The catalysed reaction is choline(out) = choline(in). The enzyme catalyses ethanolamine(in) = ethanolamine(out). It carries out the reaction heme b(in) = heme b(out). Uniporter that mediates the transport of extracellular choline and ethanolamine into cells, thereby playing a key role in phospholipid biosynthesis. Choline and ethanolamine are the precursors of phosphatidylcholine and phosphatidylethanolamine, respectively, the two most abundant phospholipids. Transport is not coupled with proton transport and is exclusively driven by the choline (or ethanolamine) gradient across the plasma membrane. Also acts as a heme b transporter that mediates heme efflux from the cytoplasm to the extracellular compartment. Its function is as follows. Uniporter that mediates the transport of extracellular choline and ethanolamine into cells. Choline and ethanolamine are the precursors of phosphatidylcholine and phosphatidylethanolamine, respectively, the two most abundant phospholipids. Transport is not coupled with proton transport and is exclusively driven by the choline (or ethanolamine) gradient across the plasma membrane. Also acts as a heme b transporter that mediates heme efflux from the cytoplasm to the extracellular compartment. Heme export depends on the presence of HPX and is required to maintain intracellular free heme balance, protecting cells from heme toxicity. Heme export provides protection from heme or ferrous iron toxicities in liver, brain, sensory neurons and during erythropoiesis, a process in which heme synthesis intensifies. Possibly export coproporphyrin and protoporphyrin IX, which are both intermediate products in the heme biosynthetic pathway. Does not export bilirubin. The molecular mechanism of heme transport, whether electrogenic, electroneutral or coupled to other ions, remains to be elucidated. In terms of biological role, heme transporter that promotes heme efflux from the mitochondrion to the cytoplasm. Essential for erythroid differentiation. The polypeptide is Choline/ethanolamine transporter FLVCR1 (Flvcr1) (Mus musculus (Mouse)).